Here is a 305-residue protein sequence, read N- to C-terminus: Ribonuclease BN (305 aa).

7 residues coordinate Zn(2+): histidine 64, histidine 66, aspartate 68, histidine 69, histidine 141, aspartate 212, and histidine 270. Aspartate 68 serves as the catalytic Proton acceptor.

The protein belongs to the RNase Z family. RNase BN subfamily. As to quaternary structure, homodimer. Zn(2+) is required as a cofactor.

Functionally, zinc phosphodiesterase, which has both exoribonuclease and endoribonuclease activities. This Escherichia coli O6:K15:H31 (strain 536 / UPEC) protein is Ribonuclease BN.